Consider the following 314-residue polypeptide: 1D-myo-inositol 2-acetamido-2-deoxy-alpha-D-glucopyranoside deacetylase 2 (314 aa).

Residues His25, Asp28, and His161 each contribute to the Zn(2+) site.

This sequence belongs to the MshB deacetylase family. Zn(2+) is required as a cofactor.

It carries out the reaction 1D-myo-inositol 2-acetamido-2-deoxy-alpha-D-glucopyranoside + H2O = 1D-myo-inositol 2-amino-2-deoxy-alpha-D-glucopyranoside + acetate. Its function is as follows. Catalyzes the deacetylation of 1D-myo-inositol 2-acetamido-2-deoxy-alpha-D-glucopyranoside (GlcNAc-Ins) in the mycothiol biosynthesis pathway. The polypeptide is 1D-myo-inositol 2-acetamido-2-deoxy-alpha-D-glucopyranoside deacetylase 2 (Frankia casuarinae (strain DSM 45818 / CECT 9043 / HFP020203 / CcI3)).